Here is a 741-residue protein sequence, read N- to C-terminus: Transketolase, chloroplastic (741 aa).

The transit peptide at 1–67 (MASSSSLTLS…TKQQFSVRAS (67 aa)) directs the protein to the chloroplast. Residue histidine 103 participates in substrate binding. Residues histidine 143 and 192 to 194 (GPL) contribute to the thiamine diphosphate site. Residue aspartate 233 participates in Mg(2+) binding. Thiamine diphosphate-binding residues include glycine 234 and asparagine 263. 2 residues coordinate Mg(2+): asparagine 263 and isoleucine 265. Residues histidine 340, arginine 434, and serine 461 each contribute to the substrate site. A thiamine diphosphate-binding site is contributed by histidine 340. Thiamine diphosphate contacts are provided by glutamate 488 and phenylalanine 515. Glutamate 488 functions as the Proton donor in the catalytic mechanism. The substrate site is built by histidine 539, aspartate 547, and arginine 598.

This sequence belongs to the transketolase family. In terms of assembly, homodimer. Mg(2+) is required as a cofactor. Ca(2+) serves as cofactor. It depends on Mn(2+) as a cofactor. The cofactor is Co(2+). Requires thiamine diphosphate as cofactor.

It is found in the plastid. The protein resides in the chloroplast thylakoid membrane. The catalysed reaction is D-sedoheptulose 7-phosphate + D-glyceraldehyde 3-phosphate = aldehydo-D-ribose 5-phosphate + D-xylulose 5-phosphate. Its pathway is carbohydrate biosynthesis; Calvin cycle. In terms of biological role, catalyzes the reversible transfer of a two-carbon ketol group from fructose-6-phosphate or sedoheptulose-7-phosphate to glyceraldehyde-3-phosphate to yield xylulose-5-phosphate and erythrose-4-phosphate or ribose-5-phosphate, respectively. The chain is Transketolase, chloroplastic from Solanum tuberosum (Potato).